The chain runs to 134 residues: Profilin-2 (134 aa).

A disulfide bridge links C13 with C118. The Involved in PIP2 interaction signature appears at 84–100 (AVIRGKKGAGGITIKKT). The residue at position 114 (T114) is a Phosphothreonine.

Belongs to the profilin family. Occurs in many kinds of cells as a complex with monomeric actin in a 1:1 ratio. Phosphorylated by MAP kinases.

It localises to the cytoplasm. It is found in the cytoskeleton. Binds to actin and affects the structure of the cytoskeleton. At high concentrations, profilin prevents the polymerization of actin, whereas it enhances it at low concentrations. This Olea europaea (Common olive) protein is Profilin-2.